We begin with the raw amino-acid sequence, 108 residues long: MLKGNLAGLMKQAQQMQENMKKMQEQLAQIEVEGQSGAGLVKVTMTCRNEVRRVAIDPSLLADDKDMLEDLVAAAFNDAVRKAEATSQEKMSGMTSGLPLPPGFKLPF.

Polar residues predominate over residues 85-95 (ATSQEKMSGMT). The segment at 85 to 108 (ATSQEKMSGMTSGLPLPPGFKLPF) is disordered. A compositionally biased stretch (pro residues) spans 99–108 (PLPPGFKLPF).

It belongs to the YbaB/EbfC family. Homodimer.

Its subcellular location is the cytoplasm. The protein localises to the nucleoid. In terms of biological role, binds to DNA and alters its conformation. May be involved in regulation of gene expression, nucleoid organization and DNA protection. The protein is Nucleoid-associated protein BamMC406_1737 of Burkholderia ambifaria (strain MC40-6).